The sequence spans 448 residues: tRNA modification GTPase MnmE (448 aa).

(6S)-5-formyl-5,6,7,8-tetrahydrofolate is bound by residues arginine 21, glutamate 80, and lysine 119. In terms of domain architecture, TrmE-type G spans 215–370; it reads GVKLAIVGRP…LSEEILKKVG (156 aa). Residue asparagine 225 coordinates K(+). GTP-binding positions include 225 to 230, 244 to 250, and 269 to 272; these read NVGKSS, TDIAGTT, and DTAG. Serine 229 is a Mg(2+) binding site. Positions 244, 246, and 249 each coordinate K(+). Threonine 250 provides a ligand contact to Mg(2+). (6S)-5-formyl-5,6,7,8-tetrahydrofolate is bound at residue lysine 448.

Belongs to the TRAFAC class TrmE-Era-EngA-EngB-Septin-like GTPase superfamily. TrmE GTPase family. In terms of assembly, homodimer. Heterotetramer of two MnmE and two MnmG subunits. K(+) is required as a cofactor.

Its subcellular location is the cytoplasm. Its function is as follows. Exhibits a very high intrinsic GTPase hydrolysis rate. Involved in the addition of a carboxymethylaminomethyl (cmnm) group at the wobble position (U34) of certain tRNAs, forming tRNA-cmnm(5)s(2)U34. In Aquifex aeolicus (strain VF5), this protein is tRNA modification GTPase MnmE.